Consider the following 218-residue polypeptide: Large ribosomal subunit protein uL3 (218 aa).

This sequence belongs to the universal ribosomal protein uL3 family. In terms of assembly, part of the 50S ribosomal subunit. Forms a cluster with proteins L14 and L19.

Functionally, one of the primary rRNA binding proteins, it binds directly near the 3'-end of the 23S rRNA, where it nucleates assembly of the 50S subunit. The chain is Large ribosomal subunit protein uL3 from Corynebacterium efficiens (strain DSM 44549 / YS-314 / AJ 12310 / JCM 11189 / NBRC 100395).